Reading from the N-terminus, the 137-residue chain is Small ribosomal subunit protein uS12 (137 aa).

Residues 33 to 57 (KVQTNVSSPQKRGVATRVGTMTPKK) form a disordered region. The residue at position 102 (D102) is a 3-methylthioaspartic acid.

Belongs to the universal ribosomal protein uS12 family. Part of the 30S ribosomal subunit. Contacts proteins S8 and S17. May interact with IF1 in the 30S initiation complex.

In terms of biological role, with S4 and S5 plays an important role in translational accuracy. Functionally, interacts with and stabilizes bases of the 16S rRNA that are involved in tRNA selection in the A site and with the mRNA backbone. Located at the interface of the 30S and 50S subunits, it traverses the body of the 30S subunit contacting proteins on the other side and probably holding the rRNA structure together. The combined cluster of proteins S8, S12 and S17 appears to hold together the shoulder and platform of the 30S subunit. This chain is Small ribosomal subunit protein uS12, found in Streptococcus thermophilus (strain CNRZ 1066).